The primary structure comprises 330 residues: MLSLKLPRLFSIDQIPQVFHEQGILFGYRHPQSSATACILSLFQMTNETLNIWTHLLPFWFFAWRFVTALYMTDIKNDSYSWPMLVYMCTSCVYPLVSSCAHTFSSMSKNARHICYFLDYGAVNLFSLGSAIAYSAYTFPDALMCTTFHDYYVALAVLNTILSTGLSCYSRFLEIQKPRLCKVIRVLAFAYPYTWDSLPIFYRLFLFPGESAQNEATSYHQKHMIMTLLASFLYSAHLPERLAPGRFDYIGHSHQLFHVCVILATHMQMEAILLDKTLRKEWLLATSKPFSFSQIAGAILLCIIFSLSNIIYFSAALYRIPKPELHKKET.

Residues 1-51 (MLSLKLPRLFSIDQIPQVFHEQGILFGYRHPQSSATACILSLFQMTNETLN) lie on the Cytoplasmic side of the membrane. A helical transmembrane segment spans residues 52–72 (IWTHLLPFWFFAWRFVTALYM). Residues 73 to 80 (TDIKNDSY) lie on the Extracellular side of the membrane. A helical membrane pass occupies residues 81 to 101 (SWPMLVYMCTSCVYPLVSSCA). At 102 to 113 (HTFSSMSKNARH) the chain is on the cytoplasmic side. Residues 114 to 134 (ICYFLDYGAVNLFSLGSAIAY) form a helical membrane-spanning segment. Topologically, residues 135 to 141 (SAYTFPD) are extracellular. Residues 142–162 (ALMCTTFHDYYVALAVLNTIL) form a helical membrane-spanning segment. The Cytoplasmic segment spans residues 163 to 186 (STGLSCYSRFLEIQKPRLCKVIRV). Residues 187–207 (LAFAYPYTWDSLPIFYRLFLF) traverse the membrane as a helical segment. Residues 208-253 (PGESAQNEATSYHQKHMIMTLLASFLYSAHLPERLAPGRFDYIGHS) lie on the Extracellular side of the membrane. A helical transmembrane segment spans residues 254–274 (HQLFHVCVILATHMQMEAILL). Residues 275–294 (DKTLRKEWLLATSKPFSFSQ) are Cytoplasmic-facing. The helical transmembrane segment at 295-315 (IAGAILLCIIFSLSNIIYFSA) threads the bilayer. Residues 316–330 (ALYRIPKPELHKKET) lie on the Extracellular side of the membrane.

It belongs to the ADIPOR family. As to expression, expressed in the brain, lung, kidney, colon, adrenal and lung.

It is found in the cell membrane. Its function is as follows. Plasma membrane progesterone (P4) receptor coupled to G proteins. Seems to act through a G(i) mediated pathway. May be involved in oocyte maturation. The polypeptide is Membrane progestin receptor gamma (Homo sapiens (Human)).